Reading from the N-terminus, the 308-residue chain is Acetyl-coenzyme A carboxylase carboxyl transferase subunit beta 1 (308 aa).

One can recognise a CoA carboxyltransferase N-terminal domain in the interval 25–294 (VWTKCTSCEQ…PMVVSVNESP (270 aa)). Positions 29, 32, 48, and 51 each coordinate Zn(2+). The C4-type zinc-finger motif lies at 29 to 51 (CTSCEQVLYHAELERNLEVCPKC). The interval 289–308 (SVNESPNEEPYSVPEADEKG) is disordered.

It belongs to the AccD/PCCB family. In terms of assembly, acetyl-CoA carboxylase is a heterohexamer composed of biotin carboxyl carrier protein (AccB), biotin carboxylase (AccC) and two subunits each of ACCase subunit alpha (AccA) and ACCase subunit beta (AccD). Zn(2+) is required as a cofactor.

The protein localises to the cytoplasm. The enzyme catalyses N(6)-carboxybiotinyl-L-lysyl-[protein] + acetyl-CoA = N(6)-biotinyl-L-lysyl-[protein] + malonyl-CoA. The protein operates within lipid metabolism; malonyl-CoA biosynthesis; malonyl-CoA from acetyl-CoA: step 1/1. In terms of biological role, component of the acetyl coenzyme A carboxylase (ACC) complex. Biotin carboxylase (BC) catalyzes the carboxylation of biotin on its carrier protein (BCCP) and then the CO(2) group is transferred by the transcarboxylase to acetyl-CoA to form malonyl-CoA. The chain is Acetyl-coenzyme A carboxylase carboxyl transferase subunit beta 1 from Vibrio campbellii (strain ATCC BAA-1116).